A 407-amino-acid polypeptide reads, in one-letter code: [Pyruvate dehydrogenase (acetyl-transferring)] kinase isozyme 2, mitochondrial (407 aa).

The 230-residue stretch at 135–364 folds into the Histidine kinase domain; it reads LEYKDTYGDD…DAVIYLKALS (230 aa). Residues Tyr215 and Tyr216 each carry the phosphotyrosine modification. ATP is bound by residues 251–258, Asp290, 309–310, and 325–330; these read ELFKNAMR, ST, and GFGYGL. At Lys376 the chain carries N6-succinyllysine.

Belongs to the PDK/BCKDK protein kinase family. As to quaternary structure, homodimer, and heterodimer with PDK1. Interacts with the pyruvate dehydrogenase complex subunit DLAT, and is part of the multimeric pyruvate dehydrogenase complex that contains multiple copies of pyruvate dehydrogenase (E1), dihydrolipoamide acetyltransferase (DLAT, E2) and lipoamide dehydrogenase (DLD, E3). Expressed in many tissues, with the highest level in heart and skeletal muscle, intermediate levels in brain, kidney, pancreas and liver, and low levels in placenta and lung.

The protein localises to the mitochondrion matrix. The catalysed reaction is L-seryl-[pyruvate dehydrogenase E1 alpha subunit] + ATP = O-phospho-L-seryl-[pyruvate dehydrogenase E1 alpha subunit] + ADP + H(+). Its activity is regulated as follows. Activity is enhanced by binding to the pyruvate dehydrogenase subunit DLAT. Inhibited by ADP and pyruvate; these compounds interfere with DLAT binding and thereby inhibit kinase activity. Inhibited by dichloroacetate. Inhibited by AZD7545; this compound interferes with DLAT binding and thereby inhibits kinase activity. In terms of biological role, kinase that plays a key role in the regulation of glucose and fatty acid metabolism and homeostasis via phosphorylation of the pyruvate dehydrogenase subunits PDHA1 and PDHA2. This inhibits pyruvate dehydrogenase activity, and thereby regulates metabolite flux through the tricarboxylic acid cycle, down-regulates aerobic respiration and inhibits the formation of acetyl-coenzyme A from pyruvate. Inhibition of pyruvate dehydrogenase decreases glucose utilization and increases fat metabolism. Mediates cellular responses to insulin. Plays an important role in maintaining normal blood glucose levels and in metabolic adaptation to nutrient availability. Via its regulation of pyruvate dehydrogenase activity, plays an important role in maintaining normal blood pH and in preventing the accumulation of ketone bodies under starvation. Plays a role in the regulation of cell proliferation and in resistance to apoptosis under oxidative stress. Plays a role in p53/TP53-mediated apoptosis. The chain is [Pyruvate dehydrogenase (acetyl-transferring)] kinase isozyme 2, mitochondrial (PDK2) from Homo sapiens (Human).